Reading from the N-terminus, the 155-residue chain is uncharacterized protein (155 aa).

The tract at residues 56–79 (GEKRPTHRRPYRRTKPYPKRPSML) is disordered. Residues 60 to 73 (PTHRRPYRRTKPYP) show a composition bias toward basic residues.

This is an uncharacterized protein from Sinorhizobium fredii (strain NBRC 101917 / NGR234).